The following is an 863-amino-acid chain: Autotaxin (863 aa).

The first 27 residues, 1–27 (MARRSSFQSCQIISLFTFAVGVNICLG), serve as a signal peptide directing secretion. Residues 28–35 (FTAHRIKR) constitute a propeptide, removed by furin. Asn54 is a glycosylation site (N-linked (GlcNAc...) asparagine). SMB domains follow at residues 55–98 (ISGS…LKTA) and 99–143 (RGWE…GESH). 10 disulfides stabilise this stretch: Cys59–Cys76, Cys63–Cys94, Cys74–Cys87, Cys80–Cys86, Cys103–Cys120, Cys108–Cys138, Cys118–Cys131, Cys124–Cys130, Cys149–Cys195, and Cys157–Cys351. A Cell attachment site motif is present at residues 127–129 (RGD). Residues 145-502 (VDDDCEEIKA…STFKYKTKVP (358 aa)) form a phosphodiesterase region. Zn(2+) is bound by residues Asp172 and Thr210. The Nucleophile role is filled by Thr210. 3 residues coordinate 1-(9Z-octadecenoyl)-sn-glycero-3-phosphate: Thr210, Asn231, and Asp312. Residues Thr210, Asn231, and Asp312 each contribute to the 1-hexadecanoyl-sn-glycero-3-phosphate site. Thr210, Asn231, and Asp312 together coordinate 1-tetradecanoyl-sn-glycerol 3-phosphate. Zn(2+)-binding residues include Asp312, His316, Asp359, and His360. 5 disulfide bridges follow: Cys367–Cys469, Cys414–Cys806, Cys567–Cys667, Cys569–Cys652, and Cys775–Cys785. Asn411 carries N-linked (GlcNAc...) asparagine glycosylation. His475 serves as a coordination point for Zn(2+). His475 serves as a coordination point for 1-(9Z-octadecenoyl)-sn-glycero-3-phosphate. His475 serves as a coordination point for 1-hexadecanoyl-sn-glycero-3-phosphate. His475 contributes to the 1-tetradecanoyl-sn-glycerol 3-phosphate binding site. An N-linked (GlcNAc...) asparagine glycan is attached at Asn525. A nuclease-like domain region spans residues 598–863 (LYGRPAVLYR…TYLHTYESEI (266 aa)). Ca(2+)-binding residues include Asp740, Asp742, Asp744, Leu746, and Asp748. Asn807 is a glycosylation site (N-linked (GlcNAc...) asparagine). The segment at 830–851 (IEHLTSLDFFRKTSRSYPEILT) is required for secretion.

The protein belongs to the nucleotide pyrophosphatase/phosphodiesterase family. Zn(2+) is required as a cofactor. Ca(2+) serves as cofactor. Post-translationally, N-glycosylation, but not furin-cleavage, plays a critical role on secretion and on lysoPLD activity. In terms of processing, the interdomain disulfide bond between Cys-414 and Cys-806 is essential for catalytic activity. Detected in blood plasma (at protein level). Predominantly expressed in brain, placenta, ovary, and small intestine. Expressed in a number of carcinomas such as hepatocellular and prostate carcinoma, neuroblastoma and non-small-cell lung cancer. Expressed in body fluids such as plasma, cerebral spinal fluid (CSF), saliva, follicular and amniotic fluids. Not detected in leukocytes. Isoform 1 is more highly expressed in peripheral tissues than in the central nervous system (CNS). Adipocytes only express isoform 1. Isoform 3 is more highly expressed in the brain than in peripheral tissues.

The protein localises to the secreted. It catalyses the reaction a 1-O-alkyl-sn-glycero-3-phosphoethanolamine + H2O = a 1-O-alkyl-sn-glycero-3-phosphate + ethanolamine + H(+). The catalysed reaction is a 1-acyl-sn-glycero-3-phosphoethanolamine + H2O = a 1-acyl-sn-glycero-3-phosphate + ethanolamine + H(+). The enzyme catalyses 1-(9Z-octadecenoyl)-sn-glycero-3-phosphoethanolamine + H2O = 1-(9Z-octadecenoyl)-sn-glycero-3-phosphate + ethanolamine + H(+). It carries out the reaction a 1-O-alkyl-sn-glycero-3-phosphocholine + H2O = a 1-O-alkyl-sn-glycero-3-phosphate + choline + H(+). It catalyses the reaction 1-O-(9Z-octadecenyl)-sn-glycero-3-phosphocholine + H2O = 1-O-(9Z-octadecenyl)-sn-glycero-3-phosphate + choline + H(+). The catalysed reaction is 1-O-hexadecyl-sn-glycero-3-phosphocholine + H2O = 1-O-hexadecyl-sn-glycero-3-phosphate + choline + H(+). The enzyme catalyses a 1-O-(1Z-alkenyl)-sn-glycero-3-phosphocholine + H2O = a 1-O-(1Z-alkenyl)-sn-glycero-3-phosphate + choline + H(+). It carries out the reaction a 1-acyl-sn-glycero-3-phosphocholine + H2O = a 1-acyl-sn-glycero-3-phosphate + choline + H(+). It catalyses the reaction 1-dodecanoyl-sn-glycero-3-phosphocholine + H2O = 1-dodecanoyl-sn-glycerol 3-phosphate + choline + H(+). The catalysed reaction is 1-(9Z-octadecenoyl)-sn-glycero-3-phosphocholine + H2O = 1-(9Z-octadecenoyl)-sn-glycero-3-phosphate + choline + H(+). The enzyme catalyses 1-tetradecanoyl-sn-glycero-3-phosphocholine + H2O = 1-tetradecanoyl-sn-glycerol 3-phosphate + choline + H(+). It carries out the reaction 1-decanoyl-sn-glycero-3-phosphocholine + H2O = 1-decanoyl-sn-glycero-3-phosphate + choline + H(+). It catalyses the reaction 1-octadecanoyl-sn-glycero-3-phosphocholine + H2O = 1-octadecanoyl-sn-glycero-3-phosphate + choline + H(+). The catalysed reaction is 1-hexadecanoyl-sn-glycero-3-phosphocholine + H2O = 1-hexadecanoyl-sn-glycero-3-phosphate + choline + H(+). The enzyme catalyses 1-hexanoyl-sn-glycero-3-phosphocholine + H2O = 1-hexanoyl-sn-glycero-3-phosphate + choline + H(+). It carries out the reaction 1-(9Z,12Z)-octadecadienoyl-sn-glycero-3-phosphocholine + H2O = 1-(9Z,12Z)-octadecadienoyl-sn-glycero-3-phosphate + choline + H(+). It catalyses the reaction sphing-4-enine-phosphocholine + H2O = sphing-4-enine 1-phosphate + choline + H(+). The catalysed reaction is 1-(5Z,8Z,11Z,14Z-eicosatetraenoyl)-sn-glycero-3-phosphocholine + H2O = 1-(5Z,8Z,11Z,14Z-eicosatetraenoyl)-sn-glycero-3-phosphate + choline + H(+). The enzyme catalyses a 2-acyl-sn-glycero-3-phosphocholine + H2O = a 2-acyl-sn-glycerol 3-phosphate + choline + H(+). It carries out the reaction a 1,2-diacyl-sn-glycero-3-phosphocholine + H2O = a 1,2-diacyl-sn-glycero-3-phosphate + choline + H(+). It catalyses the reaction 1,2-dioctanoyl-sn-glycero-3-phosphocholine + H2O = 1,2-dioctanoyl-sn-glycero-3-phosphate + choline + H(+). The catalysed reaction is 1,2-didecanoyl-sn-glycero-3-phosphocholine + H2O = 1,2-didecanoyl-sn-glycero-3-phosphate + choline + H(+). The enzyme catalyses a 1-acyl-sn-glycero-3-phospho-L-serine + H2O = a 1-acyl-sn-glycero-3-phosphate + L-serine + H(+). It carries out the reaction 1-(9Z-octadecenoyl)-sn-glycero-3-phospho-L-serine + H2O = 1-(9Z-octadecenoyl)-sn-glycero-3-phosphate + L-serine + H(+). It catalyses the reaction a 2-acyl-sn-glycero-3-phospho-L-serine + H2O = a 2-acyl-sn-glycerol 3-phosphate + L-serine + H(+). With respect to regulation, inhibited by lysophosphatidic acid (LPA) and sphingosine-1-phosphate (S1P). Inhibited by EDTA and EGTA. Its function is as follows. Secreted lysophospholipase D that hydrolyzes lysophospholipids to produce the signaling molecule lysophosphatidic acid (LPA) in extracellular fluids. Its major substrate is lysophosphatidylcholine. Can also act on sphingosylphosphorylcholine producing sphingosine-1-phosphate, a modulator of cell motility. Can hydrolyze, in vitro, bis-pNPP, to some extent pNP-TMP, and barely ATP. Involved in several motility-related processes such as angiogenesis and neurite outgrowth. Acts as an angiogenic factor by stimulating migration of smooth muscle cells and microtubule formation. Stimulates migration of melanoma cells, probably via a pertussis toxin-sensitive G protein. May have a role in induction of parturition. Possible involvement in cell proliferation and adipose tissue development. Required for LPA production in activated platelets, cleaves the sn-1 lysophospholipids to generate sn-1 lysophosphatidic acids containing predominantly 18:2 and 20:4 fatty acids. Shows a preference for the sn-1 to the sn-2 isomer of 1-O-alkyl-sn-glycero-3-phosphocholine (lyso-PAF). The sequence is that of Autotaxin from Homo sapiens (Human).